The following is an 85-amino-acid chain: Large ribosomal subunit protein bL27 (85 aa).

The interval 1-23 is disordered; sequence MAHKKAGGSTRNGRDSESKRLGV.

It belongs to the bacterial ribosomal protein bL27 family.

In Thioalkalivibrio sulfidiphilus (strain HL-EbGR7), this protein is Large ribosomal subunit protein bL27.